The following is a 156-amino-acid chain: Endoribonuclease YbeY (156 aa).

Zn(2+)-binding residues include histidine 115, histidine 119, and histidine 125.

Belongs to the endoribonuclease YbeY family. It depends on Zn(2+) as a cofactor.

The protein resides in the cytoplasm. Single strand-specific metallo-endoribonuclease involved in late-stage 70S ribosome quality control and in maturation of the 3' terminus of the 16S rRNA. In Actinobacillus succinogenes (strain ATCC 55618 / DSM 22257 / CCUG 43843 / 130Z), this protein is Endoribonuclease YbeY.